A 96-amino-acid polypeptide reads, in one-letter code: Co-chaperonin GroES (96 aa).

This sequence belongs to the GroES chaperonin family. As to quaternary structure, heptamer of 7 subunits arranged in a ring. Interacts with the chaperonin GroEL.

The protein localises to the cytoplasm. In terms of biological role, together with the chaperonin GroEL, plays an essential role in assisting protein folding. The GroEL-GroES system forms a nano-cage that allows encapsulation of the non-native substrate proteins and provides a physical environment optimized to promote and accelerate protein folding. GroES binds to the apical surface of the GroEL ring, thereby capping the opening of the GroEL channel. This is Co-chaperonin GroES from Caulobacter sp. (strain K31).